Reading from the N-terminus, the 139-residue chain is Protein archease (139 aa).

Ca(2+) is bound by residues Asp12, Asp138, and Ile139.

The protein belongs to the archease family.

Activates the tRNA-splicing ligase complex by facilitating the enzymatic turnover of catalytic subunit RtcB. Acts by promoting the guanylylation of RtcB, a key intermediate step in tRNA ligation. Can also alter the NTP specificity of RtcB such that ATP, dGTP or ITP is used efficiently. The sequence is that of Protein archease from Sulfolobus acidocaldarius (strain ATCC 33909 / DSM 639 / JCM 8929 / NBRC 15157 / NCIMB 11770).